A 333-amino-acid chain; its full sequence is Glycerol-3-phosphate dehydrogenase [NAD(P)+] (333 aa).

4 residues coordinate NADPH: S13, Y14, R34, and K108. K108, G137, and T139 together coordinate sn-glycerol 3-phosphate. A141 contacts NADPH. Residues K193, D246, S256, R257, and N258 each coordinate sn-glycerol 3-phosphate. The Proton acceptor role is filled by K193. R257 is a binding site for NADPH. Residue E283 coordinates NADPH.

It belongs to the NAD-dependent glycerol-3-phosphate dehydrogenase family.

Its subcellular location is the cytoplasm. It catalyses the reaction sn-glycerol 3-phosphate + NAD(+) = dihydroxyacetone phosphate + NADH + H(+). The catalysed reaction is sn-glycerol 3-phosphate + NADP(+) = dihydroxyacetone phosphate + NADPH + H(+). It participates in membrane lipid metabolism; glycerophospholipid metabolism. Its function is as follows. Catalyzes the reduction of the glycolytic intermediate dihydroxyacetone phosphate (DHAP) to sn-glycerol 3-phosphate (G3P), the key precursor for phospholipid synthesis. The polypeptide is Glycerol-3-phosphate dehydrogenase [NAD(P)+] (Idiomarina loihiensis (strain ATCC BAA-735 / DSM 15497 / L2-TR)).